The sequence spans 377 residues: DNA methyltransferase CcrM (377 aa).

The RAMA domain occupies leucine 271–alanine 373.

Belongs to the N(4)/N(6)-methyltransferase family.

It catalyses the reaction a 2'-deoxyadenosine in DNA + S-adenosyl-L-methionine = an N(6)-methyl-2'-deoxyadenosine in DNA + S-adenosyl-L-homocysteine + H(+). A beta subtype methylase that recognizes the double-stranded sequence 5'-GANTC-3' and methylates on A-2 on both strands. Overexpression from a moderate-copy number plasmid (10-12 copies/cell) leads to enlarged, branched cells, many with 3-5 genome equivalents. Contributes to the accurate cell-cycle control of DNA replication and cellular morphology. This Brucella abortus (strain 2308) protein is DNA methyltransferase CcrM.